The primary structure comprises 383 residues: Cytochrome b (383 aa).

Transmembrane regions (helical) follow at residues 32-52, 76-98, 113-133, and 179-199; these read FGSL…FLAM, WLIR…CHIA, TWSI…LGYV, and FFSL…AHMI. Positions 82 and 96 each coordinate heme b. The heme b site is built by H183 and H197. An a ubiquinone-binding site is contributed by H202. 4 consecutive transmembrane segments (helical) span residues 225 to 245, 289 to 309, 321 to 341, and 348 to 368; these read FIFK…IFVC, LLGV…PLTD, LMKL…WIGA, and YLEV…FIVP.

Belongs to the cytochrome b family. As to quaternary structure, fungal cytochrome b-c1 complex contains 10 subunits; 3 respiratory subunits, 2 core proteins and 5 low-molecular weight proteins. Cytochrome b-c1 complex is a homodimer. Heme b serves as cofactor.

Its subcellular location is the mitochondrion inner membrane. Functionally, component of the ubiquinol-cytochrome c reductase complex (complex III or cytochrome b-c1 complex) that is part of the mitochondrial respiratory chain. The b-c1 complex mediates electron transfer from ubiquinol to cytochrome c. Contributes to the generation of a proton gradient across the mitochondrial membrane that is then used for ATP synthesis. This Schizophyllum commune (Split gill fungus) protein is Cytochrome b (cob).